Reading from the N-terminus, the 293-residue chain is Acetylglutamate kinase (293 aa).

Substrate contacts are provided by residues 66–67 (GG), arginine 88, and asparagine 190.

It belongs to the acetylglutamate kinase family. ArgB subfamily.

It is found in the cytoplasm. The enzyme catalyses N-acetyl-L-glutamate + ATP = N-acetyl-L-glutamyl 5-phosphate + ADP. The protein operates within amino-acid biosynthesis; L-arginine biosynthesis; N(2)-acetyl-L-ornithine from L-glutamate: step 2/4. Its function is as follows. Catalyzes the ATP-dependent phosphorylation of N-acetyl-L-glutamate. The sequence is that of Acetylglutamate kinase from Thiobacillus denitrificans (strain ATCC 25259 / T1).